The following is a 65-amino-acid chain: Large ribosomal subunit protein bL28 (65 aa).

The disordered stretch occupies residues 1 to 26 (MARRDDLTNKGPMSGNKRSHALNATK). Over residues 17 to 26 (KRSHALNATK) the composition is skewed to basic residues.

Belongs to the bacterial ribosomal protein bL28 family.

In Mycoplasma mobile (strain ATCC 43663 / 163K / NCTC 11711) (Mesomycoplasma mobile), this protein is Large ribosomal subunit protein bL28.